A 573-amino-acid chain; its full sequence is Glutamate--tRNA ligase (573 aa).

The short motif at 107–117 (PNPDGAFHLGN) is the 'HIGH' region element.

It belongs to the class-I aminoacyl-tRNA synthetase family. Glutamate--tRNA ligase type 2 subfamily.

Its subcellular location is the cytoplasm. The enzyme catalyses tRNA(Glu) + L-glutamate + ATP = L-glutamyl-tRNA(Glu) + AMP + diphosphate. In terms of biological role, catalyzes the attachment of glutamate to tRNA(Glu) in a two-step reaction: glutamate is first activated by ATP to form Glu-AMP and then transferred to the acceptor end of tRNA(Glu). The sequence is that of Glutamate--tRNA ligase from Thermococcus kodakarensis (strain ATCC BAA-918 / JCM 12380 / KOD1) (Pyrococcus kodakaraensis (strain KOD1)).